A 359-amino-acid polypeptide reads, in one-letter code: Olfactory receptor 5T2 (359 aa).

The Extracellular portion of the chain corresponds to 1–64 (MSYSIYKSTV…GFTDNLELQT (64 aa)). Asn44 carries N-linked (GlcNAc...) asparagine glycosylation. The helical transmembrane segment at 65 to 85 (IFFFLFLAIYLFTLMGNLGLI) threads the bilayer. The Cytoplasmic segment spans residues 86–93 (LVVIRDSQ). The helical transmembrane segment at 94-114 (LHKPMYYFLSMLSSVDACYSS) threads the bilayer. Over 115 to 138 (VITPNMLVDFTTKNKVISFLGCVA) the chain is Extracellular. The chain crosses the membrane as a helical span at residues 139–159 (QVFLACSFGTTECFLLAAMAY). Over 160–178 (DRYVAIYNPLLYSVSMSPR) the chain is Cytoplasmic. A helical membrane pass occupies residues 179 to 199 (VYMPLINASYVAGILHATIHT). Topologically, residues 200-235 (VATFSLSFCGANEIRRVFCDIPPLLAISYSDTHTNQ) are extracellular. Residues 236–256 (LLLFYFVGSIELVTILIVLIS) traverse the membrane as a helical segment. The Cytoplasmic portion of the chain corresponds to 257 to 276 (YGLILLAILKMYSAEGRRKV). A helical membrane pass occupies residues 277-297 (FSTCGAHLTGVSIYYGTILFM). The Extracellular segment spans residues 298–310 (YVRPSSSYASDHD). A helical membrane pass occupies residues 311 to 331 (MIVSIFYTIVIPLLNPVIYSL). The Cytoplasmic segment spans residues 332 to 359 (RNKDVKDSMKKMFGKNQVINKVYFHTKK).

This sequence belongs to the G-protein coupled receptor 1 family.

The protein localises to the cell membrane. In terms of biological role, odorant receptor. The polypeptide is Olfactory receptor 5T2 (OR5T2) (Homo sapiens (Human)).